Here is a 719-residue protein sequence, read N- to C-terminus: Protein Hook homolog 2 (719 aa).

Residues 1 to 161 (MSVDKAELCG…ELMTKDTPDS (161 aa)) are required for localization to the centrosome and induction of aggresome formation. Residues 1-548 (MSVDKAELCG…LKRKLEEHLQ (548 aa)) form a sufficient for interaction with microtubules region. The Calponin-homology (CH) domain occupies 6 to 122 (AELCGSLLTW…KLLQLVLGCA (117 aa)). Serine 163 carries the phosphoserine modification. Coiled coils occupy residues 180–427 (LSEE…AQLQ) and 455–607 (AELR…VDKA). A Phosphothreonine modification is found at threonine 230. Residues 533-719 (DAISILLKRK…SLNLRPTDKH (187 aa)) are required for localization to the centrosome and induction of aggresome formation. The tract at residues 584-719 (HNLQKKDADL…SLNLRPTDKH (136 aa)) is sufficient for interaction with CNTRL. A disordered region spans residues 696-719 (LATNSRRGPLGRLASLNLRPTDKH). Phosphoserine is present on serine 710.

The protein belongs to the hook family. In terms of assembly, self-associates. Component of the FTS/Hook/FHIP complex (FHF complex), composed of AKTIP/FTS, FHIP1B, and one or more members of the Hook family of proteins HOOK1, HOOK2, and HOOK3. May interact directly with AKTIP/FTS, HOOK1 and HOOK3. Associates with several subunits of the homotypic vesicular sorting complex (the HOPS complex) including VPS16 and VPS41; these interactions may be indirect. Interacts with CNTRL. Interacts with microtubules. Interacts with ZC3H14. Interacts with LRGUK (via guanylate kinase-like domain). Interacts with CCDC181. Interacts with AP4M1; the interaction is direct, mediates the interaction between FTS-Hook-FHIP (FHF) complex and AP-4 and the perinuclear distribution of AP-4.

It localises to the cytoplasm. It is found in the cytoskeleton. The protein localises to the microtubule organizing center. The protein resides in the centrosome. Its subcellular location is the golgi apparatus. It localises to the trans-Golgi network. Functionally, component of the FTS/Hook/FHIP complex (FHF complex). The FHF complex may function to promote vesicle trafficking and/or fusion via the homotypic vesicular protein sorting complex (the HOPS complex). Contributes to the establishment and maintenance of centrosome function. May function in the positioning or formation of aggresomes, which are pericentriolar accumulations of misfolded proteins, proteasomes and chaperones. FHF complex promotes the distribution of AP-4 complex to the perinuclear area of the cell. The chain is Protein Hook homolog 2 (HOOK2) from Homo sapiens (Human).